A 537-amino-acid polypeptide reads, in one-letter code: MFKREEIIEMANKDFEKAWIETKDLIKAKKINESYPRIKPVFGKTHPVNDTIENLRQAYLRMGFEEYINPVIVDERDIYKQFGPEAMAVLDRCFYLAGLPRPDVGLSDEKISQIEKLGIKVSEHKESLQKILHGYKKGTLDGDDLVLEISNALEISSEMGLKILEDVFPEFKDLTAVSSKLTLRSHMTSGWFLTVSDLMNKKPLPFKLFSIDRCFRREQKEDKSHLMTYHSASCAIAGEGVDINDGKAIAEGLLSQFGFTNFKFIPDEKKSKYYTPETQTEVYAYHPKLKEWLEVATFGVYSPVALSKYGIDVPVMNLGLGVERLAMISGNFADVREMVYPQFYEHKLNDRNVASMVKLDKVPVMDEIYDLTKELIESCVKNKDLKSPCELAIEKTFSFGKTKKNVKINIFEKEEGKNLLGPSILNEIYVYDGNVIGIPESFDGVKEEFKDFLEKGKSEGVATGIRYIDALCFKITSKLEEAFVSNTTEFKVKVPIVRSLSDINLKIDDIALKQIMSKNKVIDVRGPVFLNVEVKIE.

Residues 186–188 (HMT), 231–233 (SAS), 273–274 (YY), and Asn-317 contribute to the substrate site.

This sequence belongs to the class-II aminoacyl-tRNA synthetase family. O-phosphoseryl-tRNA(Cys) synthetase subfamily. Homotetramer. Interacts with SepCysS.

It catalyses the reaction tRNA(Cys) + O-phospho-L-serine + ATP = O-phospho-L-seryl-tRNA(Cys) + AMP + diphosphate. Catalyzes the attachment of O-phosphoserine (Sep) to tRNA(Cys). This is O-phosphoserine--tRNA(Cys) ligase from Methanococcus maripaludis (strain DSM 14266 / JCM 13030 / NBRC 101832 / S2 / LL).